Reading from the N-terminus, the 610-residue chain is MSEIFDAKAFLKTVTSQPGVYRMYDAGGTVIYVGKAKDLKKRLSSYFRSNLASRKTEALVAQIQHIDVTVTHTETEALLLEHNYIKLYQPRYNVLLRDDKSYPFIFLSGDTHPRLAMHRGAKHAKGEYFGPFPNGYAVRETLALLQKIFPIRQCENSVYRNRSRPCLQYQIGRCLGPCVAGLVSEEEYTQQVEYVRLFLSGKDDQVLTQLIARMEKASQDLAFEEAARIRDQIQAVRRVTERQFVSNAGDDLDVIGVAFDAGMACVHVLFIRQGKVLGSRSYFPKVPGGTELGEVVETFVGQFYLQGSQMRTLPGEILLDFNLSDKTLLADSLSELAGRRIHVQTKPRGDRARYLKLARTNAATALITKLSQQSTITQRLTALAAVLKLPAIKRMECFDISHTMGEQTVASCVVFDANGPLRAEYRRYNIAGITPGDDYAAMNQVLRRRYGKAIEESKIPDVILIDGGKGQLAQAKAVFAELDVPWDKHRPLLLGVAKGADRKAGLETLFFEPEGEGFSLPPDSPALHVIQHIRDESHDHAIGGHRKKRAKVKNTSTLETIEGVGPKRRQMLLKYMGGLQGLRNASVEEIAKVPGISQGLAEKIFWSLKH.

In terms of domain architecture, GIY-YIG spans 16-94 (SQPGVYRMYD…IKLYQPRYNV (79 aa)). The 36-residue stretch at 204 to 239 (DQVLTQLIARMEKASQDLAFEEAARIRDQIQAVRRV) folds into the UVR domain.

The protein belongs to the UvrC family. As to quaternary structure, interacts with UvrB in an incision complex.

It localises to the cytoplasm. Its function is as follows. The UvrABC repair system catalyzes the recognition and processing of DNA lesions. UvrC both incises the 5' and 3' sides of the lesion. The N-terminal half is responsible for the 3' incision and the C-terminal half is responsible for the 5' incision. The polypeptide is UvrABC system protein C (Salmonella schwarzengrund (strain CVM19633)).